A 224-amino-acid polypeptide reads, in one-letter code: Ribose-5-phosphate isomerase A 2 (224 aa).

Residues 27–30 (SGST), 83–86 (DGTD), and 96–99 (KGGG) contribute to the substrate site. Catalysis depends on Glu-105, which acts as the Proton acceptor. Position 123 (Lys-123) interacts with substrate.

It belongs to the ribose 5-phosphate isomerase family. As to quaternary structure, homodimer.

The catalysed reaction is aldehydo-D-ribose 5-phosphate = D-ribulose 5-phosphate. The protein operates within carbohydrate degradation; pentose phosphate pathway; D-ribose 5-phosphate from D-ribulose 5-phosphate (non-oxidative stage): step 1/1. Its function is as follows. Catalyzes the reversible conversion of ribose-5-phosphate to ribulose 5-phosphate. This Oceanobacillus iheyensis (strain DSM 14371 / CIP 107618 / JCM 11309 / KCTC 3954 / HTE831) protein is Ribose-5-phosphate isomerase A 2.